An 89-amino-acid chain; its full sequence is Small ribosomal subunit protein uS15 (89 aa).

It belongs to the universal ribosomal protein uS15 family. As to quaternary structure, part of the 30S ribosomal subunit. Forms a bridge to the 50S subunit in the 70S ribosome, contacting the 23S rRNA.

In terms of biological role, one of the primary rRNA binding proteins, it binds directly to 16S rRNA where it helps nucleate assembly of the platform of the 30S subunit by binding and bridging several RNA helices of the 16S rRNA. Forms an intersubunit bridge (bridge B4) with the 23S rRNA of the 50S subunit in the ribosome. This is Small ribosomal subunit protein uS15 from Proteus mirabilis (strain HI4320).